The chain runs to 160 residues: Ureidoglycolate lyase (160 aa).

The protein belongs to the ureidoglycolate lyase family. Homodimer. Ni(2+) serves as cofactor.

It carries out the reaction (S)-ureidoglycolate = urea + glyoxylate. The protein operates within nitrogen metabolism; (S)-allantoin degradation. In terms of biological role, catalyzes the catabolism of the allantoin degradation intermediate (S)-ureidoglycolate, generating urea and glyoxylate. Involved in the anaerobic utilization of allantoin as sole nitrogen source. Reinforces the induction of genes involved in the degradation of allantoin and glyoxylate by producing glyoxylate. The chain is Ureidoglycolate lyase from Shigella flexneri serotype 5b (strain 8401).